Consider the following 62-residue polypeptide: 6.7 kDa chloroplast outer envelope membrane protein (62 aa).

The Chloroplast intermembrane portion of the chain corresponds to 1–17 (MESVAKPATTKEGSAKQ). A helical membrane pass occupies residues 18–40 (AAIVVGVLALGWFAIQVAFIPLF). Residues 41–62 (NKVRGGGSDKKDDDVNAFTPDT) lie on the Cytoplasmic side of the membrane.

It localises to the plastid. It is found in the chloroplast outer membrane. The chain is 6.7 kDa chloroplast outer envelope membrane protein from Spinacia oleracea (Spinach).